A 479-amino-acid chain; its full sequence is GTPase Der (479 aa).

EngA-type G domains lie at 3 to 167 (FKVA…GEAR) and 208 to 383 (MRIA…KVWN). GTP is bound by residues 9 to 16 (GRPNVGKS), 56 to 60 (DTAGF), 119 to 122 (NKAE), 214 to 221 (GRPNAGKS), 261 to 265 (DTAGM), and 326 to 329 (NKWD). Residues 384–468 (SRVSTGKLNR…PIRIALRTSD (85 aa)) form the KH-like domain.

The protein belongs to the TRAFAC class TrmE-Era-EngA-EngB-Septin-like GTPase superfamily. EngA (Der) GTPase family. In terms of assembly, associates with the 50S ribosomal subunit.

In terms of biological role, GTPase that plays an essential role in the late steps of ribosome biogenesis. This Mesorhizobium japonicum (strain LMG 29417 / CECT 9101 / MAFF 303099) (Mesorhizobium loti (strain MAFF 303099)) protein is GTPase Der.